A 429-amino-acid polypeptide reads, in one-letter code: Transcriptional adapter 3 (429 aa).

Positions 41 to 70 (IEELDTLQLELETLLSSASRRLRALEEQRQ) form a coiled coil. 3 disordered regions span residues 86–132 (KLEK…TKVQ), 208–257 (EERR…PFGP), and 274–308 (PMED…HTRS). 2 stretches are compositionally biased toward basic and acidic residues: residues 208 to 221 (EERR…DKKK) and 230 to 249 (LDAK…HEPP). The stretch at 364-404 (LLKLAREEMRKQELRQRVRVADNEVMEAFRRIMAARQKKRT) forms a coiled coil.

It belongs to the NGG1 family.

The protein localises to the nucleus. In terms of biological role, functions as a component of the PCAF complex. The PCAF complex is capable of efficiently acetylating histones in a nucleosomal context. This chain is Transcriptional adapter 3 (tada3), found in Danio rerio (Zebrafish).